Here is a 93-residue protein sequence, read N- to C-terminus: Small ribosomal subunit protein uS15 (93 aa).

It belongs to the universal ribosomal protein uS15 family. As to quaternary structure, part of the 30S ribosomal subunit. Forms a bridge to the 50S subunit in the 70S ribosome, contacting the 23S rRNA.

Its function is as follows. One of the primary rRNA binding proteins, it binds directly to 16S rRNA where it helps nucleate assembly of the platform of the 30S subunit by binding and bridging several RNA helices of the 16S rRNA. Functionally, forms an intersubunit bridge (bridge B4) with the 23S rRNA of the 50S subunit in the ribosome. The polypeptide is Small ribosomal subunit protein uS15 (Ehrlichia ruminantium (strain Gardel)).